We begin with the raw amino-acid sequence, 513 residues long: Protein phosphatase 1H (513 aa).

Ser-7 is modified (phosphoserine). One can recognise a PPM-type phosphatase domain in the interval 77-506; the sequence is ATGYAEVINA…DDISVYVIPL (430 aa). The interval 110-133 is disordered; it reads ITSTPNRNSKRRSSLPNGEGLQLK. Position 113 is a phosphothreonine (Thr-113). Residues Ser-123 and Ser-210 each carry the phosphoserine modification. An Omega-N-methylarginine modification is found at Arg-212. At Ser-220 the chain carries Phosphoserine. At Thr-223 the chain carries Phosphothreonine. Ser-421 carries the post-translational modification Phosphoserine.

Belongs to the PP2C family.

Its subcellular location is the nucleus. The protein resides in the cytoplasm. It catalyses the reaction O-phospho-L-seryl-[protein] + H2O = L-seryl-[protein] + phosphate. It carries out the reaction O-phospho-L-threonyl-[protein] + H2O = L-threonyl-[protein] + phosphate. Dephosphorylates CDKN1B at 'Thr-187', thus removing a signal for proteasomal degradation. The chain is Protein phosphatase 1H (Ppm1h) from Rattus norvegicus (Rat).